The chain runs to 223 residues: Ethylene-inducing xylanase 1 (223 aa).

Residues 1-19 (MVSFTSLLAAFSVVSGVLT) form the signal peptide. Residues 34–223 (KRTPSSTGTS…SSGSATMTVS (190 aa)) enclose the GH11 domain. The Nucleophile role is filled by glutamate 119. The tract at residues 174–184 (RRTKRTSGSVN) is nuclear localization signal. Glutamate 210 acts as the Proton donor in catalysis.

It belongs to the glycosyl hydrolase 11 (cellulase G) family.

Its subcellular location is the secreted. It localises to the host nucleus. The catalysed reaction is Endohydrolysis of (1-&gt;4)-beta-D-xylosidic linkages in xylans.. It participates in glycan degradation; xylan degradation. In terms of biological role, endo-1,4-beta-xylanase involved in the hydrolysis of xylan, a major structural heterogeneous polysaccharide found in plant biomass representing the second most abundant polysaccharide in the biosphere, after cellulose. Acts as an effector that localizes to the host nucleus to contribute to the virulence process. Induces host innate immunity responses; triggers BAK1-and SOBIR1-dependent cell death, salicylic acid signaling and jasmonic acid signaling. Does not exhibit any cell death when transiently expressed in N.benthamiana. In Verticillium dahliae (strain VdLs.17 / ATCC MYA-4575 / FGSC 10137) (Verticillium wilt), this protein is Ethylene-inducing xylanase 1.